The primary structure comprises 339 residues: Dihydroorotate dehydrogenase (quinone) (339 aa).

Residues 62 to 66 (AGMDK) and T86 each bind FMN. Residue K66 participates in substrate binding. Residue 111–115 (NRMGF) participates in substrate binding. Positions 139 and 172 each coordinate FMN. N172 is a binding site for substrate. S175 serves as the catalytic Nucleophile. Substrate is bound at residue N177. Residues K217 and T245 each contribute to the FMN site. 246-247 (NT) is a substrate binding site. Residues G268, G297, and 318 to 319 (YS) contribute to the FMN site.

It belongs to the dihydroorotate dehydrogenase family. Type 2 subfamily. In terms of assembly, monomer. It depends on FMN as a cofactor.

Its subcellular location is the cell membrane. It carries out the reaction (S)-dihydroorotate + a quinone = orotate + a quinol. Its pathway is pyrimidine metabolism; UMP biosynthesis via de novo pathway; orotate from (S)-dihydroorotate (quinone route): step 1/1. Its function is as follows. Catalyzes the conversion of dihydroorotate to orotate with quinone as electron acceptor. The polypeptide is Dihydroorotate dehydrogenase (quinone) (Shewanella sp. (strain ANA-3)).